The chain runs to 351 residues: Dihydroorotate dehydrogenase (quinone) (351 aa).

FMN is bound by residues alanine 61–lysine 65 and threonine 85. Lysine 65 is a substrate binding site. Asparagine 110–phenylalanine 114 serves as a coordination point for substrate. The FMN site is built by asparagine 139 and asparagine 172. Substrate is bound at residue asparagine 172. Catalysis depends on serine 175, which acts as the Nucleophile. Position 177 (asparagine 177) interacts with substrate. Lysine 217 and threonine 245 together coordinate FMN. Asparagine 246–threonine 247 is a substrate binding site. Residues glycine 268, glycine 297, and tyrosine 318–serine 319 each bind FMN.

It belongs to the dihydroorotate dehydrogenase family. Type 2 subfamily. Monomer. FMN serves as cofactor.

Its subcellular location is the cell membrane. It carries out the reaction (S)-dihydroorotate + a quinone = orotate + a quinol. It participates in pyrimidine metabolism; UMP biosynthesis via de novo pathway; orotate from (S)-dihydroorotate (quinone route): step 1/1. Functionally, catalyzes the conversion of dihydroorotate to orotate with quinone as electron acceptor. The polypeptide is Dihydroorotate dehydrogenase (quinone) (Xanthomonas axonopodis pv. citri (strain 306)).